A 350-amino-acid polypeptide reads, in one-letter code: Protein RecA (350 aa).

Gly67 to Thr74 is an ATP binding site.

Belongs to the RecA family.

Its subcellular location is the cytoplasm. In terms of biological role, can catalyze the hydrolysis of ATP in the presence of single-stranded DNA, the ATP-dependent uptake of single-stranded DNA by duplex DNA, and the ATP-dependent hybridization of homologous single-stranded DNAs. It interacts with LexA causing its activation and leading to its autocatalytic cleavage. The polypeptide is Protein RecA (Chromobacterium violaceum (strain ATCC 12472 / DSM 30191 / JCM 1249 / CCUG 213 / NBRC 12614 / NCIMB 9131 / NCTC 9757 / MK)).